Here is a 100-residue protein sequence, read N- to C-terminus: Urease subunit gamma (100 aa).

The protein belongs to the urease gamma subunit family. In terms of assembly, heterotrimer of UreA (gamma), UreB (beta) and UreC (alpha) subunits. Three heterotrimers associate to form the active enzyme.

It is found in the cytoplasm. The catalysed reaction is urea + 2 H2O + H(+) = hydrogencarbonate + 2 NH4(+). It participates in nitrogen metabolism; urea degradation; CO(2) and NH(3) from urea (urease route): step 1/1. This chain is Urease subunit gamma, found in Pseudomonas fluorescens (strain Pf0-1).